The chain runs to 258 residues: MTLIHPTAVIDPKAELDSGVKVGAYTVIGPNVQIGANTEIGPHAVINGHTSIGENNRIFQFASLGEIPQDKKYRDEPTKLIIGNGNTIREFTTFNLGTVTGIGETRIGDDNWIMAYCHLAHDCVIGNHTIFANNASLAGHVTIGDYVVLGGYTLVFQFCRIGDYAMTAFAAGVHKDVPPYFMASGYRAEPAGLNSEGMRRNGFTAEQISAVKDVYKTLYHRGIPFEEAKADILRRAETQAELAVFRDFFAQSARGIIR.

It belongs to the transferase hexapeptide repeat family. LpxA subfamily. As to quaternary structure, homotrimer.

It localises to the cytoplasm. The enzyme catalyses a (3R)-hydroxyacyl-[ACP] + UDP-N-acetyl-alpha-D-glucosamine = a UDP-3-O-[(3R)-3-hydroxyacyl]-N-acetyl-alpha-D-glucosamine + holo-[ACP]. It participates in glycolipid biosynthesis; lipid IV(A) biosynthesis; lipid IV(A) from (3R)-3-hydroxytetradecanoyl-[acyl-carrier-protein] and UDP-N-acetyl-alpha-D-glucosamine: step 1/6. In terms of biological role, involved in the biosynthesis of lipid A, a phosphorylated glycolipid that anchors the lipopolysaccharide to the outer membrane of the cell. The polypeptide is Acyl-[acyl-carrier-protein]--UDP-N-acetylglucosamine O-acyltransferase (Neisseria meningitidis serogroup B (strain ATCC BAA-335 / MC58)).